A 682-amino-acid polypeptide reads, in one-letter code: Kinesin-like protein KIF2A (682 aa).

Positions 1 to 192 (MVTSLNEDSE…LDYRPLTTSD (192 aa)) are globular. Residues 39–129 (LAPDEEIDPG…GKKDFGLASR (91 aa)) form a disordered region. Residues 99–115 (IEQSASRQQNGSVSDIS) are compositionally biased toward polar residues. Positions 198 to 528 (RICVCVRKRP…LRYANRVKEL (331 aa)) constitute a Kinesin motor domain. Residue 288–295 (GQTGSGKT) participates in ATP binding. Positions 638 to 673 (QLEAILEKKIDILTELRDKVKSFRAALQEEEHASKQ) form a coiled coil.

The protein belongs to the TRAFAC class myosin-kinesin ATPase superfamily. Kinesin family. MCAK/KIF2 subfamily. In terms of assembly, interacts with aurka and plk1. Post-translationally, phosphorylation by plk1 promotes location at spindle microtubules and spindle poles, and enhances its microtubule depolymerization activity. Phosphorylation by AURKA interferes with location at spindle microtubules and spindle poles, and inhibits its microtubule depolymerization activity.

It localises to the cytoplasm. It is found in the cytoskeleton. The protein resides in the microtubule organizing center. The protein localises to the centrosome. Its subcellular location is the spindle pole. It localises to the spindle. Functionally, plus end-directed microtubule-dependent motor. May regulate microtubule dynamics during axonal growth. Required for normal progression through mitosis. Required for normal congress of chromosomes at the metaphase plate. Required for normal spindle dynamics during mitosis. Promotes spindle turnover. Implicated in formation of bipolar mitotic spindles Has microtubule depolymerization activity. The polypeptide is Kinesin-like protein KIF2A (kif2a) (Xenopus laevis (African clawed frog)).